We begin with the raw amino-acid sequence, 170 residues long: MPTNWKDSGLRWYWVVVLVFVADQLSKQWVLSNFELYESIQLLPIFNFTYVRNYGAAFSFLSDAGGWQRWLFTFVAVGFSVVLSVWLRQQPSKMWRLNLAYTLVIGGALGNLIDRLQHGFVVDFLDFYWNTSHFPAFNIADSAICVGAALIILDSFVTGKDDKKTDGIKE.

3 helical membrane-spanning segments follow: residues 12 to 32 (WYWV…WVLS), 67 to 87 (WQRW…SVWL), and 94 to 116 (MWRL…IDRL). Residues Asp-123 and Asp-141 contribute to the active site. Residues 133–153 (HFPAFNIADSAICVGAALIIL) form a helical membrane-spanning segment.

It belongs to the peptidase A8 family.

It is found in the cell inner membrane. The catalysed reaction is Release of signal peptides from bacterial membrane prolipoproteins. Hydrolyzes -Xaa-Yaa-Zaa-|-(S,diacylglyceryl)Cys-, in which Xaa is hydrophobic (preferably Leu), and Yaa (Ala or Ser) and Zaa (Gly or Ala) have small, neutral side chains.. It participates in protein modification; lipoprotein biosynthesis (signal peptide cleavage). Functionally, this protein specifically catalyzes the removal of signal peptides from prolipoproteins. The polypeptide is Lipoprotein signal peptidase (Shewanella halifaxensis (strain HAW-EB4)).